The sequence spans 196 residues: Small ribosomal subunit protein uS4c (196 aa).

Positions 16-40 are disordered; that stretch reads GALPGLTRKTPKSGSNLKKKFHSGK. Residues 89–152 form the S4 RNA-binding domain; the sequence is MRLDNTLFRL…RSKDLVRNSI (64 aa).

This sequence belongs to the universal ribosomal protein uS4 family. Part of the 30S ribosomal subunit. Contacts protein S5. The interaction surface between S4 and S5 is involved in control of translational fidelity.

It localises to the plastid. The protein resides in the chloroplast. Its function is as follows. One of the primary rRNA binding proteins, it binds directly to 16S rRNA where it nucleates assembly of the body of the 30S subunit. With S5 and S12 plays an important role in translational accuracy. The sequence is that of Small ribosomal subunit protein uS4c (rps4) from Anthoxanthum odoratum (Sweet vernal grass).